The primary structure comprises 381 residues: Succinyl-diaminopimelate desuccinylase (381 aa).

A Zn(2+)-binding site is contributed by histidine 68. The active site involves aspartate 70. Aspartate 101 serves as a coordination point for Zn(2+). Catalysis depends on glutamate 135, which acts as the Proton acceptor. The Zn(2+) site is built by glutamate 136, glutamate 164, and histidine 350.

This sequence belongs to the peptidase M20A family. DapE subfamily. Homodimer. Requires Zn(2+) as cofactor. The cofactor is Co(2+).

The catalysed reaction is N-succinyl-(2S,6S)-2,6-diaminopimelate + H2O = (2S,6S)-2,6-diaminopimelate + succinate. Its pathway is amino-acid biosynthesis; L-lysine biosynthesis via DAP pathway; LL-2,6-diaminopimelate from (S)-tetrahydrodipicolinate (succinylase route): step 3/3. Functionally, catalyzes the hydrolysis of N-succinyl-L,L-diaminopimelic acid (SDAP), forming succinate and LL-2,6-diaminopimelate (DAP), an intermediate involved in the bacterial biosynthesis of lysine and meso-diaminopimelic acid, an essential component of bacterial cell walls. The polypeptide is Succinyl-diaminopimelate desuccinylase (Neisseria meningitidis serogroup A / serotype 4A (strain DSM 15465 / Z2491)).